A 946-amino-acid polypeptide reads, in one-letter code: Nonribosomal peptide synthetase pngA (946 aa).

Residues 32–450 (AIASREPTRY…AGREKDSIIV (419 aa)) are adenylation (A) domain. A Carrier domain is found at 580 to 659 (QPRSGLEQSL…TLSDALKQHA (80 aa)). Serine 618 carries the O-(pantetheine 4'-phosphoryl)serine modification. The interval 681 to 933 (PIWLVHPVGG…ILDAENIFSF (253 aa)) is thioesterase (TE) domain.

Belongs to the NRP synthetase family.

The catalysed reaction is 2 3-phenylpyruvate + H(+) = phenguignardate + H2O. In terms of biological role, nonribosomal peptide synthetase that mediates the biosynthesis of phenguignardic acid. PngA alone is sufficient for phenguignardic acid synthesis. PngA first activates phenylpyruvic acid (PPA) through its A domain to AMP-PPA. The PPA unit is then loaded to the T domain and eventually transferred to the TE domain. Another PPA unit is then loaded onto the T domain. The TE domain likely promotes the enolate formation on the attached unit, followed by a nucleophilic attack on the carbonyl to yield an ether linkage between the two units. Finally, the TE domain probably catalyzes a similar reaction to give the cyclized dioxolanone core and releases phenguignardic acid. The sequence is that of Nonribosomal peptide synthetase pngA from Aspergillus terreus (strain NIH 2624 / FGSC A1156).